A 444-amino-acid polypeptide reads, in one-letter code: Elongation factor 1-alpha (444 aa).

The tr-type G domain maps to 15–236 (KPHINLAVVG…VLDTFQPPPR (222 aa)). A G1 region spans residues 24–31 (GHVDNGKS). 24 to 31 (GHVDNGKS) provides a ligand contact to GTP. Mg(2+) is bound at residue S31. Positions 80–84 (GVTIE) are G2. Residues 101 to 104 (DLPG) are G3. Residues 101 to 105 (DLPGH) and 163 to 166 (NKMD) contribute to the GTP site. Residues 163–166 (NKMD) are G4. The G5 stretch occupies residues 202–204 (SAV).

Belongs to the TRAFAC class translation factor GTPase superfamily. Classic translation factor GTPase family. EF-Tu/EF-1A subfamily.

The protein resides in the cytoplasm. It carries out the reaction GTP + H2O = GDP + phosphate + H(+). Its function is as follows. GTP hydrolase that promotes the GTP-dependent binding of aminoacyl-tRNA to the A-site of ribosomes during protein biosynthesis. The polypeptide is Elongation factor 1-alpha (Pyrobaculum arsenaticum (strain DSM 13514 / JCM 11321 / PZ6)).